Reading from the N-terminus, the 437-residue chain is Enolase 2 (437 aa).

Residue Lys-60 forms a Glycyl lysine isopeptide (Lys-Gly) (interchain with G-Cter in ubiquitin) linkage. The residue at position 138 (Ser-138) is a Phosphoserine. His-160 is an active-site residue. Ser-188 is modified (phosphoserine). Residue Lys-243 forms a Glycyl lysine isopeptide (Lys-Gly) (interchain with G-Cter in ubiquitin) linkage. 2 residues coordinate Mg(2+): Asp-247 and Glu-296. Thr-313 is subject to Phosphothreonine. Asp-321 serves as a coordination point for Mg(2+). Position 324 is a phosphothreonine (Thr-324). Residue Lys-358 forms a Glycyl lysine isopeptide (Lys-Gly) (interchain with G-Cter in ubiquitin) linkage.

It belongs to the enolase family. As to quaternary structure, homodimer. Requires Mg(2+) as cofactor.

It localises to the cytoplasm. The enzyme catalyses (2R)-2-phosphoglycerate = phosphoenolpyruvate + H2O. It functions in the pathway carbohydrate degradation; glycolysis; pyruvate from D-glyceraldehyde 3-phosphate: step 4/5. This is Enolase 2 (ENO2) from Saccharomyces cerevisiae (strain ATCC 204508 / S288c) (Baker's yeast).